Consider the following 510-residue polypeptide: Abscisic acid 8'-hydroxylase 2 (510 aa).

The chain crosses the membrane as a helical span at residues phenylalanine 3–leucine 23. Cysteine 441 lines the heme pocket.

It belongs to the cytochrome P450 family. Heme is required as a cofactor.

It localises to the membrane. It catalyses the reaction 2-cis-(+)-abscisate + reduced [NADPH--hemoprotein reductase] + O2 = (+)-8'-hydroxyabscisate + oxidized [NADPH--hemoprotein reductase] + H2O + H(+). The protein operates within plant hormone degradation; abscisic acid degradation. In terms of biological role, involved in the oxidative degradation of abscisic acid. The protein is Abscisic acid 8'-hydroxylase 2 (CYP707A6) of Oryza sativa subsp. japonica (Rice).